The sequence spans 95 residues: Small ribosomal subunit protein mS37 (95 aa).

The 43-residue stretch at 27-69 (ANRCLVLMSNLLQCWSSNGHMNPVCEKLATDLKACTSQNVMGS) folds into the CHCH domain. Short sequence motifs (cx9C motif) lie at residues 30–40 (CLVLMSNLLQC) and 51–61 (CEKLATDLKAC). 2 cysteine pairs are disulfide-bonded: cysteine 30/cysteine 61 and cysteine 40/cysteine 51.

It belongs to the mitochondrion-specific ribosomal protein mS37 family. In terms of assembly, component of the mitochondrial small ribosomal subunit.

The protein localises to the mitochondrion. Its function is as follows. Involved in mitochondrial genome encoded proteins translation. This is Small ribosomal subunit protein mS37 (MRP10) from Eremothecium gossypii (strain ATCC 10895 / CBS 109.51 / FGSC 9923 / NRRL Y-1056) (Yeast).